A 446-amino-acid chain; its full sequence is Histone acetyltransferase type B subunit 2 (446 aa).

5 WD repeats span residues 138-178 (DHPG…ITPS), 189-229 (GHKE…GTSK), 231-270 (LKYS…QIID), 286-326 (GHSD…SKVH), and 330-370 (GHQD…DEQT). The segment at 372 to 376 (DDAED) is interaction with the histone H4 N-terminus. The stretch at 387-427 (GHTNHLADFSWNRNDPWLVCSAAEDNLLQIWKVANSIVSKE) is one WD 6 repeat. The disordered stretch occupies residues 427-446 (EPADMSTPELDDPKPKQSSH). Basic and acidic residues predominate over residues 437–446 (DDPKPKQSSH).

It belongs to the WD repeat RBAP46/RBAP48/MSI1 family. In terms of assembly, component of the HAT-B complex composed of at least hat-1 and hat-2. The HAT-B complex binds to histone H4 tail.

It is found in the cytoplasm. It localises to the nucleus. In terms of biological role, regulatory subunit of the histone acetylase B (HAT-B) complex. The complex acetylates 'Lys-12' of histone H4 which is required for telomeric silencing. This Neurospora crassa (strain ATCC 24698 / 74-OR23-1A / CBS 708.71 / DSM 1257 / FGSC 987) protein is Histone acetyltransferase type B subunit 2 (hat-2).